The primary structure comprises 209 residues: Large ribosomal subunit protein uL3 (209 aa).

Q150 is subject to N5-methylglutamine.

It belongs to the universal ribosomal protein uL3 family. Part of the 50S ribosomal subunit. Forms a cluster with proteins L14 and L19. Post-translationally, methylated by PrmB.

Functionally, one of the primary rRNA binding proteins, it binds directly near the 3'-end of the 23S rRNA, where it nucleates assembly of the 50S subunit. This chain is Large ribosomal subunit protein uL3, found in Cronobacter sakazakii (strain ATCC BAA-894) (Enterobacter sakazakii).